Reading from the N-terminus, the 246-residue chain is Granzyme H (246 aa).

The N-terminal stretch at 1–18 (MQPFLLLLAFLLTPGAGT) is a signal peptide. Positions 19–20 (EE) are cleaved as a propeptide — activation peptide. Residues 21–244 (IIGGHEAKPH…FLPWIKRTMK (224 aa)) form the Peptidase S1 domain. Positions 46–48 (RKR) are mediates the preference for acidic residues at the P3' and P4' sites. Cysteines 49 and 65 form a disulfide. Histidine 64 functions as the Charge relay system in the catalytic mechanism. N-linked (GlcNAc...) asparagine glycans are attached at residues asparagine 71 and asparagine 104. Catalysis depends on aspartate 108, which acts as the Charge relay system. Cystine bridges form between cysteine 142–cysteine 208 and cysteine 172–cysteine 187. Asparagine 179 is a glycosylation site (N-linked (GlcNAc...) asparagine). Residue serine 202 is the Charge relay system of the active site.

Belongs to the peptidase S1 family. Granzyme subfamily. Constitutively expressed in NK cells.

It is found in the cytolytic granule. Inhibited by SERPINB1. In terms of biological role, cytotoxic chymotrypsin-like serine protease with preference for bulky and aromatic residues at the P1 position and acidic residues at the P3' and P4' sites. Probably necessary for target cell lysis in cell-mediated immune responses. Participates in the antiviral response via direct cleavage of several proteins essential for viral replication. This is Granzyme H (GZMH) from Homo sapiens (Human).